The following is a 2241-amino-acid chain: GON-4-like protein (2241 aa).

2 disordered regions span residues 1 to 46 (MLPC…SSVS) and 122 to 259 (KLHA…GRGQ). Positions 30-40 (SAVKPESDQVK) are enriched in basic and acidic residues. The segment covering 122 to 135 (KLHATGSKRGKKMT) has biased composition (basic residues). The span at 143–152 (QEDRCDHLTL) shows a compositional bias: basic and acidic residues. Positions 183 to 201 (PSGSQSAKPVSQPRKSTQP) are enriched in polar residues. Ser-206 carries the post-translational modification Phosphoserine. The span at 243 to 255 (RRKKKKGTKRKRD) shows a compositional bias: basic residues. Phosphoserine is present on Ser-346. Acidic residues predominate over residues 366-394 (EDDSSDEEYQPDDEEEDETAEESLLESDV). Residues 366 to 460 (EDDSSDEEYQ…PPKPKQTRDS (95 aa)) are disordered. Positions 600–1339 (EMGFSNMEDD…EEAREEISGS (740 aa)) are required for interaction with YY1, SIN3A and HDAC1, and transcriptional repression activity. Phosphoserine is present on Ser-775. Disordered regions lie at residues 1008–1031 (PSPS…SEAP) and 1111–1131 (RKPY…SPCM). Positions 1111-1125 (RKPYVRRRPSKRRGV) are enriched in basic residues. Ser-1268 bears the Phosphoserine mark. 2 disordered regions span residues 1301 to 1320 (ALEP…TPGD) and 1356 to 1601 (LDTG…RARA). A compositionally biased stretch (polar residues) spans 1386-1416 (PTKTPSSSQEPPDEGTSGTDVNKGSSKNALS). Ser-1426 is subject to Phosphoserine. The span at 1434 to 1443 (SSSVDGQSVG) shows a compositional bias: polar residues. Acidic residues-rich tracts occupy residues 1458–1476 (EEEE…EDEM) and 1510–1534 (GESE…EAEG). Positions 1586–1600 (RNNHRARNKRGSRAR) are enriched in basic residues. PAH domains are found at residues 1624 to 1696 (EQKD…LLPE) and 1706 to 1777 (EQQA…FDHL). A disordered region spans residues 1809-1960 (PDVEEEEEPP…AVGSTLPSPR (152 aa)). 2 stretches are compositionally biased toward basic and acidic residues: residues 1836–1848 (NHDK…DGAK) and 1879–1901 (CDSK…HREA). Phosphoserine is present on residues Ser-1896, Ser-1902, and Ser-1977. Disordered regions lie at residues 2002-2025 (EVRS…AVSE), 2039-2149 (EKLP…VSST), and 2208-2241 (CEAS…ELDE). Ser-2107 is modified (phosphoserine). Residues 2140-2149 (CANNSKVSST) show a composition bias toward polar residues. The Myb-like domain maps to 2148–2201 (STGEKVVLWTREADRVILTMCQEQGAQPQTFNIISQQLGNKTPAEVSHRFRELM).

In terms of assembly, found in a complex with YY1, SIN3A and HDAC1.

It is found in the nucleus. Functionally, has transcriptional repressor activity, probably as part of a complex with YY1, SIN3A and HDAC1. Required for B cell lymphopoiesis. This Homo sapiens (Human) protein is GON-4-like protein (GON4L).